A 99-amino-acid polypeptide reads, in one-letter code: MNPANYLYLSALLFTIGASGVLLRRNAIVMFMCVELMLNAVNLAFVTFARMHGHLDGQMIAFFTMVVAACEVVVGLAIIMTIFRTRKSASVDDANLLKG.

Helical transmembrane passes span 3–23 (PANYLYLSALLFTIGASGVLL), 28–48 (IVMFMCVELMLNAVNLAFVTF), and 59–79 (MIAFFTMVVAACEVVVGLAII).

The protein belongs to the complex I subunit 4L family. In terms of assembly, NDH-1 is composed of 14 different subunits. Subunits NuoA, H, J, K, L, M, N constitute the membrane sector of the complex.

The protein localises to the cell membrane. It carries out the reaction a quinone + NADH + 5 H(+)(in) = a quinol + NAD(+) + 4 H(+)(out). Its function is as follows. NDH-1 shuttles electrons from NADH, via FMN and iron-sulfur (Fe-S) centers, to quinones in the respiratory chain. The immediate electron acceptor for the enzyme in this species is believed to be a menaquinone. Couples the redox reaction to proton translocation (for every two electrons transferred, four hydrogen ions are translocated across the cytoplasmic membrane), and thus conserves the redox energy in a proton gradient. The polypeptide is NADH-quinone oxidoreductase subunit K (Mycobacterium marinum (strain ATCC BAA-535 / M)).